The following is a 1453-amino-acid chain: NK-tumor recognition protein (1453 aa).

The 166-residue stretch at 10–175 (HFDIEINREP…ADVRVIDCGV (166 aa)) folds into the PPIase cyclophilin-type domain. Residues 187–625 (KKRKKPTCSE…RWKPGQKPWK (439 aa)) form a disordered region. A compositionally biased stretch (low complexity) spans 195 to 213 (SEGSDSSSRSSSSSESSSE). Residues 221-240 (IRRRRHKRRPKVRHAKKRRK) are compositionally biased toward basic residues. Basic and acidic residues predominate over residues 259–286 (YSERSDVNEKRSVDSNTKREKPVVRPEE). A Glycyl lysine isopeptide (Lys-Gly) (interchain with G-Cter in SUMO2) cross-link involves residue Lys-323. Over residues 329–348 (SGRKIKGRGTIRYHTPPRSR) the composition is skewed to basic residues. Residues Ser-379, Ser-401, and Ser-416 each carry the phosphoserine modification. A compositionally biased stretch (basic and acidic residues) spans 382–402 (KWSKGDKLSDPCSSRWDERSL). Residues 403–421 (SQRSRSWSYNGYYSDLSTA) show a composition bias toward polar residues. Residues 425 to 460 (DGHHKKHRKEKKFKHKKKAKKQKHCRRHRQTKKRRI) are compositionally biased toward basic residues. A compositionally biased stretch (basic and acidic residues) spans 514-531 (SSRDSYRSKSHSRSDSRG). Composition is skewed to low complexity over residues 532–546 (SSRSRAVSKSSSRSL) and 554–565 (SSRSGPRRTSIS). Residues Lys-576 and Lys-579 each participate in a glycyl lysine isopeptide (Lys-Gly) (interchain with G-Cter in SUMO2) cross-link. Ser-611 is modified (phosphoserine). Residue Lys-637 forms a Glycyl lysine isopeptide (Lys-Gly) (interchain with G-Cter in SUMO2) linkage. Ser-646 carries the post-translational modification Phosphoserine. Polar residues predominate over residues 651–661 (TNIKATVSSSS). Residues 651–1453 (TNIKATVSSS…RSPSESSRYS (803 aa)) form a disordered region. Residues Lys-654 and Lys-664 each participate in a glycyl lysine isopeptide (Lys-Gly) (interchain with G-Cter in SUMO2) cross-link. 2 stretches are compositionally biased toward low complexity: residues 682–726 (RSSG…SSRS) and 736–749 (SQHSRSSSYTSVSS). Positions 755–772 (AMFRSNRKKSVTSHKRHR) are enriched in basic residues. Residues 773 to 789 (SNSEKTLHSKYVRGREK) are compositionally biased toward basic and acidic residues. Residues 799–809 (SRSSLDYSSDS) are compositionally biased toward low complexity. 2 stretches are compositionally biased toward basic and acidic residues: residues 820 to 852 (PEKEKQGKVEALNDKQGKGREEGKPKPEWECPR) and 859 to 868 (KDHSRDDSVS). Phosphoserine is present on residues Ser-880, Ser-882, Ser-884, and Ser-900. Residues 887-902 (DVTKSRKSDPRRGSEK) show a composition bias toward basic and acidic residues. Residues 903 to 913 (EEGEASSDSES) are compositionally biased toward acidic residues. The segment covering 948–958 (SSASESESSCS) has biased composition (low complexity). Residues 966 to 982 (EPQKQKHSKDDLKGDHT) are compositionally biased toward basic and acidic residues. A compositionally biased stretch (basic residues) spans 983 to 1005 (KRAREKSKAKKDKKHKAPKRKQA). Residues 1030-1045 (DPKEKRHVSEKCEAVK) are compositionally biased toward basic and acidic residues. Residues Ser-1139 and Ser-1148 each carry the phosphoserine modification. A compositionally biased stretch (polar residues) spans 1170-1180 (QESSMSESKTL). Low complexity predominate over residues 1189–1199 (SSTSVTSPVET). At Ser-1195 the chain carries Phosphoserine. Glycyl lysine isopeptide (Lys-Gly) (interchain with G-Cter in SUMO2) cross-links involve residues Lys-1208 and Lys-1249. Residues 1303-1453 (RSPHRSRSKS…RSPSESSRYS (151 aa)) are arg/Ser tandem repeat-rich. Positions 1322-1346 (SVSYSHSRSRSRSSTSSYRSRSYSR) are enriched in low complexity. Positions 1369-1379 (HSHRTSSRSRS) are enriched in basic residues. Residues 1380 to 1401 (RSSSYDLHSRSRSYTYDSYYSR) show a composition bias toward low complexity. Over residues 1416 to 1426 (RGRSYNRRSRS) the composition is skewed to basic residues.

It is found in the cell membrane. The enzyme catalyses [protein]-peptidylproline (omega=180) = [protein]-peptidylproline (omega=0). With respect to regulation, inhibited by cyclosporin A (CsA). Functionally, PPIase that catalyzes the cis-trans isomerization of proline imidic peptide bonds in oligopeptides and may therefore assist protein folding. Component of a putative tumor-recognition complex involved in the function of NK cells. The chain is NK-tumor recognition protein from Mus musculus (Mouse).